A 689-amino-acid chain; its full sequence is Glycine--tRNA ligase beta subunit (689 aa).

It belongs to the class-II aminoacyl-tRNA synthetase family. In terms of assembly, tetramer of two alpha and two beta subunits.

It localises to the cytoplasm. It carries out the reaction tRNA(Gly) + glycine + ATP = glycyl-tRNA(Gly) + AMP + diphosphate. In Acinetobacter baumannii (strain ATCC 17978 / DSM 105126 / CIP 53.77 / LMG 1025 / NCDC KC755 / 5377), this protein is Glycine--tRNA ligase beta subunit.